A 1372-amino-acid polypeptide reads, in one-letter code: Capping protein, Arp2/3 and myosin-I linker protein 3 (1372 aa).

The segment at 126-151 is disordered; the sequence is RGNADTPEGPRDTSPNSETSTSTTHS. The span at 138–151 shows a compositional bias: low complexity; sequence TSPNSETSTSTTHS. 10 LRR repeats span residues 244–264, 274–295, 303–323, 335–357, 365–385, 392–413, 424–444, 455–475, 482–501, and 509–530; these read SLEELVLDNAGLKTDFVQKLA, VLHALTLSHNPIEDKGFLSLSQ, GLTKLCLAKTAISPRGLQALG, SLRYLDLSKNPGLLATDEANALY, ALVHLDLSGTDCVIDLLLGAL, HLTYLNLARNSCSHRKGREAPP, TLSHVNLSATKLPLEALRALL, DLHLDLSSCELRSAGAQALQE, CVGSLDLSDNGFDSDLLTLV, and SLKHLFLGKNFNVKAKTLEEIL. Disordered stretches follow at residues 865-900, 970-1003, and 1024-1372; these read TLSDPPGCPGQGQDLSSRGRGRNHDHEETTDDELGT, KLRHQTQGRPRPPRTTPPGPGRPSMPAPGTRQEN, and ESSS…PGTD. The segment covering 982 to 995 has biased composition (pro residues); that stretch reads PRTTPPGPGRPSMP. Residues 1040–1073 form a necessary for localization at the cell membrane region; that stretch reads SEAPLPPLQKKRRRGLFHFRRPRSFKGDRGPGSP. Positions 1048–1063 are enriched in basic residues; the sequence is QKKRRRGLFHFRRPRS. A compositionally biased stretch (pro residues) spans 1079-1098; that stretch reads LPPPPPPPPTQESPPSPDPP. The segment covering 1099–1109 has biased composition (low complexity); it reads SLGNNSSPCWS. 2 stretches are compositionally biased toward basic and acidic residues: residues 1163-1177 and 1219-1229; these read ERAKGWSFDGKREGP and RRAEATWHIAE. Residues 1233-1244 show a composition bias toward polar residues; the sequence is PNHSCQSPSPAS. A compositionally biased stretch (basic and acidic residues) spans 1348 to 1361; that stretch reads QSCDKLEPDRRRPP.

This sequence belongs to the CARMIL family. As to expression, widely expressed, with much higher levels in fetal tissues than in adult ones. Up-regulated in certain cancer tissues.

Its subcellular location is the cytoplasm. The protein localises to the cell membrane. This is Capping protein, Arp2/3 and myosin-I linker protein 3 from Homo sapiens (Human).